Consider the following 536-residue polypeptide: ATP synthase subunit alpha, mitochondrial (536 aa).

A mitochondrion-targeting transit peptide spans 1–24; the sequence is MFKNALRRAGVAAPRISRVAQRGY. Position 195–202 (195–202) interacts with ATP; sequence GDRQTGKT.

F-type ATP synthases have 2 components, the catalytic core F(1) and the membrane-embedded component F(0), linked together by a central stalk and a peripheral stalk. The central stalk, also called rotor shaft, is often seen as part of F(1). The peripheral stalk is seen as part of F(0). F(0) contains the membrane channel next to the rotor. F-type ATP synthases form dimers but each monomer functions independently in ATP generation. The dimer consists of 17 different polypeptides: ATP1 (subunit alpha, 3 molecules per monomer, part of F(1)), ATP2 (subunit beta, 3 copies per monomer, part of F(1)), ATP3 (subunit gamma, part of the central stalk), ATP4 (subunit b, part of the peripheral stalk), ATP5/OSCP (subunit 5/OSCP, part of the peripheral stalk), ATP6 (subunit a, part of the peripheral stalk), ATP7 (subunit d, part of the peripheral stalk), ATP8 (subunit 8, part of the peripheral stalk), OLI1 (subunit c, part of the rotor, 10 molecules per monomer), ATP14 (subunit h, part of the peripheral stalk), ATP15 (subunit epsilon, part of the central stalk), ATP16 (subunit delta, part of the central stalk), ATP17 (subunit f, part of the peripheral stalk), ATP18 (subunit i/j, part of the peripheral stalk), ATP19 (subunit k, dimer-specific, at interface between monomers), ATP20 (subunit g, at interface between monomers), TIM11 (subunit e, at interface between monomers).

It is found in the mitochondrion inner membrane. Functionally, mitochondrial membrane ATP synthase (F(1)F(0) ATP synthase or Complex V) produces ATP from ADP in the presence of a proton gradient across the membrane which is generated by electron transport complexes of the respiratory chain. F-type ATP synthases consist of two structural domains, F(1) - containing the extramembraneous catalytic core, and F(0) - containing the membrane proton channel, linked together by a central stalk and a peripheral stalk. During catalysis, ATP synthesis in the catalytic domain of F(1) is coupled via a rotary mechanism of the central stalk subunits to proton translocation. Subunits alpha/ATP1 and beta/ATP2 form the catalytic core in F(1). Rotation of the central stalk against the surrounding alpha/ATP1(3)beta/ATP2(3) subunits leads to hydrolysis of ATP in three separate catalytic sites on the beta/ATP2 subunits. Subunit alpha/ATP1 does not bear the catalytic high-affinity ATP-binding sites. The sequence is that of ATP synthase subunit alpha, mitochondrial from Yarrowia lipolytica (strain CLIB 122 / E 150) (Yeast).